The sequence spans 185 residues: Guanosine deaminase (185 aa).

The 115-residue stretch at 28 to 142 (DSDHKFLTQA…AAIAIGFDDF (115 aa)) folds into the CMP/dCMP-type deaminase domain. Histidine 80 provides a ligand contact to Zn(2+). Glutamate 82 serves as the catalytic Proton donor. Cysteine 110 and cysteine 113 together coordinate Zn(2+).

It belongs to the cytidine and deoxycytidylate deaminase family. In terms of tissue distribution, expressed in roots, leaves, flowers and siliques.

Its subcellular location is the cytoplasm. It localises to the nucleus. It carries out the reaction guanosine + H2O + H(+) = xanthosine + NH4(+). Its function is as follows. Catalyzes the hydrolytic deamination of guanosine, producing xanthosine and ammonia. Deaminates exclusively guanosine and 2'-deoxyguanosine but no other aminated purines, pyrimidines, or pterines. Deamination of guanosine by GSDA is the only source of xanthosine production in Arabidopsis. In Arabidopsis thaliana (Mouse-ear cress), this protein is Guanosine deaminase.